A 129-amino-acid chain; its full sequence is Small ribosomal subunit protein uS11 (129 aa).

Belongs to the universal ribosomal protein uS11 family. In terms of assembly, part of the 30S ribosomal subunit. Interacts with proteins S7 and S18. Binds to IF-3.

Functionally, located on the platform of the 30S subunit, it bridges several disparate RNA helices of the 16S rRNA. Forms part of the Shine-Dalgarno cleft in the 70S ribosome. In Methylorubrum populi (strain ATCC BAA-705 / NCIMB 13946 / BJ001) (Methylobacterium populi), this protein is Small ribosomal subunit protein uS11.